The chain runs to 277 residues: Caspase-3 (277 aa).

Met-1 carries the N-acetylmethionine modification. Propeptides lie at residues 1-9 (MENTENSVD) and 10-28 (AKSF…KSMD). Lys-11 bears the N6-acetyllysine mark. Ser-26 is modified (phosphoserine). Catalysis depends on residues His-121 and Cys-163. Cys-163 is subject to S-nitrosocysteine; in inhibited form.

It belongs to the peptidase C14A family. In terms of assembly, heterotetramer that consists of two anti-parallel arranged heterodimers, each one formed by a 17 kDa (p17) and a 12 kDa (p12) subunit. Interacts with BIRC6/bruce. Post-translationally, cleavage by granzyme B, caspase-6, caspase-8 and caspase-10 generates the two active subunits. Additional processing of the propeptides is likely due to the autocatalytic activity of the activated protease. Active heterodimers between the small subunit of caspase-7 protease and the large subunit of caspase-3 also occur and vice versa. S-nitrosylated on its catalytic site cysteine in unstimulated cell lines and denitrosylated upon activation of the Fas apoptotic pathway, associated with an increase in intracellular caspase activity. Fas therefore activates caspase-3 not only by inducing the cleavage of the caspase zymogen to its active subunits, but also by stimulating the denitrosylation of its active site thiol. In terms of processing, ubiquitinated by BIRC6; this activity is inhibited by DIABLO/SMAC.

The protein resides in the cytoplasm. The catalysed reaction is Strict requirement for an Asp residue at positions P1 and P4. It has a preferred cleavage sequence of Asp-Xaa-Xaa-Asp-|- with a hydrophobic amino-acid residue at P2 and a hydrophilic amino-acid residue at P3, although Val or Ala are also accepted at this position.. With respect to regulation, inhibited by BIRC6; following inhibition of BIRC6-caspase binding by DIABLO/SMAC, BIRC6 is subjected to caspase cleavage, leading to an increase in active caspases. Functionally, involved in the activation cascade of caspases responsible for apoptosis execution. At the onset of apoptosis, it proteolytically cleaves poly(ADP-ribose) polymerase PARP1 at a '216-Asp-|-Gly-217' bond. Cleaves and activates sterol regulatory element binding proteins (SREBPs) between the basic helix-loop-helix leucine zipper domain and the membrane attachment domain. Cleaves and activates caspase-6, -7 and -9 (CASP6, CASP7 and CASP9, respectively). Cleaves and inactivates interleukin-18 (IL18). Triggers cell adhesion in sympathetic neurons through RET cleavage. Cleaves IL-1 beta between an Asp and an Ala, releasing the mature cytokine which is involved in a variety of inflammatory processes. Cleaves and inhibits serine/threonine-protein kinase AKT1 in response to oxidative stress. Acts as an inhibitor of type I interferon production during virus-induced apoptosis by mediating cleavage of antiviral proteins CGAS, IRF3 and MAVS, thereby preventing cytokine overproduction. Also involved in pyroptosis by mediating cleavage and activation of gasdermin-E (GSDME). Cleaves XRCC4 and phospholipid scramblase proteins XKR4, XKR8 and XKR9, leading to promote phosphatidylserine exposure on apoptotic cell surface. Cleaves BIRC6 following inhibition of BIRC6-caspase binding by DIABLO/SMAC. The protein is Caspase-3 (CASP3) of Canis lupus familiaris (Dog).